We begin with the raw amino-acid sequence, 462 residues long: Cysteine--tRNA ligase (462 aa).

Zn(2+) is bound at residue cysteine 30. The short motif at 32–42 (MTVYDYCHVGH) is the 'HIGH' region element. Zn(2+) is bound by residues cysteine 214, histidine 239, and glutamate 243. The 'KMSKS' region motif lies at 271–275 (KMSKS). Residue lysine 274 participates in ATP binding.

The protein belongs to the class-I aminoacyl-tRNA synthetase family. Monomer. The cofactor is Zn(2+).

It localises to the cytoplasm. It catalyses the reaction tRNA(Cys) + L-cysteine + ATP = L-cysteinyl-tRNA(Cys) + AMP + diphosphate. The protein is Cysteine--tRNA ligase of Cupriavidus necator (strain ATCC 17699 / DSM 428 / KCTC 22496 / NCIMB 10442 / H16 / Stanier 337) (Ralstonia eutropha).